The primary structure comprises 207 residues: Thiamine-phosphate synthase (207 aa).

Residues 38 to 42 and asparagine 70 each bind 4-amino-2-methyl-5-(diphosphooxymethyl)pyrimidine; that span reads QYRNK. The Mg(2+) site is built by aspartate 71 and aspartate 90. Serine 109 lines the 4-amino-2-methyl-5-(diphosphooxymethyl)pyrimidine pocket. 136-138 provides a ligand contact to 2-[(2R,5Z)-2-carboxy-4-methylthiazol-5(2H)-ylidene]ethyl phosphate; it reads TAT. Residue lysine 139 coordinates 4-amino-2-methyl-5-(diphosphooxymethyl)pyrimidine. Residues glycine 165 and 185–186 each bind 2-[(2R,5Z)-2-carboxy-4-methylthiazol-5(2H)-ylidene]ethyl phosphate; that span reads VS.

The protein belongs to the thiamine-phosphate synthase family. It depends on Mg(2+) as a cofactor.

It catalyses the reaction 2-[(2R,5Z)-2-carboxy-4-methylthiazol-5(2H)-ylidene]ethyl phosphate + 4-amino-2-methyl-5-(diphosphooxymethyl)pyrimidine + 2 H(+) = thiamine phosphate + CO2 + diphosphate. It carries out the reaction 2-(2-carboxy-4-methylthiazol-5-yl)ethyl phosphate + 4-amino-2-methyl-5-(diphosphooxymethyl)pyrimidine + 2 H(+) = thiamine phosphate + CO2 + diphosphate. The enzyme catalyses 4-methyl-5-(2-phosphooxyethyl)-thiazole + 4-amino-2-methyl-5-(diphosphooxymethyl)pyrimidine + H(+) = thiamine phosphate + diphosphate. It functions in the pathway cofactor biosynthesis; thiamine diphosphate biosynthesis; thiamine phosphate from 4-amino-2-methyl-5-diphosphomethylpyrimidine and 4-methyl-5-(2-phosphoethyl)-thiazole: step 1/1. Its function is as follows. Condenses 4-methyl-5-(beta-hydroxyethyl)thiazole monophosphate (THZ-P) and 2-methyl-4-amino-5-hydroxymethyl pyrimidine pyrophosphate (HMP-PP) to form thiamine monophosphate (TMP). The sequence is that of Thiamine-phosphate synthase from Xanthomonas campestris pv. campestris (strain 8004).